The sequence spans 474 residues: MIMNKMKNFKRRFSLSVPRTETIEESLAEFTEQFNQLHNRRNEDLQLGPLGRDPLQECSTFSPTDSGEEPGQLSPGVQFQRRQNQRRFSMEDVSKRLSLPMDIRLPQEFLQKLQMESPDLPKPLSRMSRRASLSDIGFGKLETYVKLDKLGEGTYATVFKGRSKLTENLVALKEIRLEHEEGAPCTAIREVSLLKNLKHANIVTLHDLIHTDRSLTLVFEYLDSDLKQYLDHCGNLMSMHNVKIFMFQLLRGLAYCHHRKILHRDLKPQNLLINERGELKLADFGLARAKSVPTKTYSNEVVTLWYRPPDVLLGSTEYSTPIDMWGVGCIHYEMATGRPLFPGSTVKEELHLIFRLLGTPTEETWPGVTAFSEFRTYSFPRYLPQPLISHAPRLDTDGIQLLSSLLLYESKSRMSAEAALSHPYFRSLGERVHQLEDTASIFSLKEIQLQKDPGYRGLAFQQPGRGKNRRQSIF.

Phosphoserine is present on residues Ser-14, Ser-74, Ser-89, Ser-98, Ser-117, and Ser-132. Residues 44–87 (DLQLGPLGRDPLQECSTFSPTDSGEEPGQLSPGVQFQRRQNQRR) are disordered. Positions 144-425 (YVKLDKLGEG…AEAALSHPYF (282 aa)) constitute a Protein kinase domain. ATP contacts are provided by residues 150 to 158 (LGEGTYATV) and Lys-173. Asp-265 acts as the Proton acceptor in catalysis. 2 positions are modified to phosphoserine: Ser-440 and Ser-443.

Belongs to the protein kinase superfamily. CMGC Ser/Thr protein kinase family. CDC2/CDKX subfamily.

The enzyme catalyses L-seryl-[protein] + ATP = O-phospho-L-seryl-[protein] + ADP + H(+). The catalysed reaction is L-threonyl-[protein] + ATP = O-phospho-L-threonyl-[protein] + ADP + H(+). In terms of biological role, may play a role in signal transduction cascades in terminally differentiated cells. The sequence is that of Cyclin-dependent kinase 18 (CDK18) from Pongo abelii (Sumatran orangutan).